Here is a 347-residue protein sequence, read N- to C-terminus: VIP36-like protein (347 aa).

A signal peptide spans 1 to 43 (MAAASRPSWWQRWRRRAWARDGAKLLLFLLLLGSGPGPRHVRA). Over 44–312 (GQAVEYLKRE…VPPTPLSGLA (269 aa)) the chain is Lumenal. One can recognise an L-type lectin-like domain in the interval 48–273 (EYLKREHSLS…DVISLKLFEL (226 aa)). The a carbohydrate site is built by serine 92 and aspartate 127. Positions 158, 160, and 162 each coordinate Ca(2+). Residue 160 to 162 (YPN) coordinates a carbohydrate. An N-linked (GlcNAc...) asparagine glycan is attached at asparagine 180. Histidine 187 is a binding site for a carbohydrate. Residue aspartate 190 participates in Ca(2+) binding. Residues cysteine 199 and cysteine 236 are joined by a disulfide bond. 257 to 259 (GDL) is a binding site for a carbohydrate. A helical membrane pass occupies residues 313–335 (LFLIVFFSLVFSVFAIVIGIILY). Topologically, residues 336 to 347 (NKWQDQSRKRFY) are cytoplasmic. Positions 343 to 345 (RKR) match the Endoplasmic reticulum retention signal motif.

Its subcellular location is the endoplasmic reticulum membrane. It localises to the golgi apparatus membrane. May be involved in the regulation of export from the endoplasmic reticulum of a subset of glycoproteins. May function as a regulator of ERGIC-53. The polypeptide is VIP36-like protein (Lman2l) (Mus musculus (Mouse)).